Consider the following 227-residue polypeptide: Cytochrome c oxidase subunit 2 (227 aa).

The Mitochondrial intermembrane segment spans residues 1-14 (MALPFQLGFQDATS). A helical membrane pass occupies residues 15-45 (PIMEELLHFHDHTLMIVFMISSLVLYLISSM). Residues 46–59 (LTTRLTHTSTMDAQ) lie on the Mitochondrial matrix side of the membrane. The helical transmembrane segment at 60–87 (EVETIWTILPAIILITIALPSLRILYMM) threads the bilayer. At 88 to 227 (DEINNPSMTI…CFEKWSTSML (140 aa)) the chain is on the mitochondrial intermembrane side. Cu cation is bound by residues histidine 161, cysteine 196, glutamate 198, cysteine 200, histidine 204, and methionine 207. Glutamate 198 is a binding site for Mg(2+).

Belongs to the cytochrome c oxidase subunit 2 family. In terms of assembly, component of the cytochrome c oxidase (complex IV, CIV), a multisubunit enzyme composed of 14 subunits. The complex is composed of a catalytic core of 3 subunits MT-CO1, MT-CO2 and MT-CO3, encoded in the mitochondrial DNA, and 11 supernumerary subunits COX4I, COX5A, COX5B, COX6A, COX6B, COX6C, COX7A, COX7B, COX7C, COX8 and NDUFA4, which are encoded in the nuclear genome. The complex exists as a monomer or a dimer and forms supercomplexes (SCs) in the inner mitochondrial membrane with NADH-ubiquinone oxidoreductase (complex I, CI) and ubiquinol-cytochrome c oxidoreductase (cytochrome b-c1 complex, complex III, CIII), resulting in different assemblies (supercomplex SCI(1)III(2)IV(1) and megacomplex MCI(2)III(2)IV(2)). Found in a complex with TMEM177, COA6, COX18, COX20, SCO1 and SCO2. Interacts with TMEM177 in a COX20-dependent manner. Interacts with COX20. Interacts with COX16. Cu cation is required as a cofactor.

It is found in the mitochondrion inner membrane. It catalyses the reaction 4 Fe(II)-[cytochrome c] + O2 + 8 H(+)(in) = 4 Fe(III)-[cytochrome c] + 2 H2O + 4 H(+)(out). Functionally, component of the cytochrome c oxidase, the last enzyme in the mitochondrial electron transport chain which drives oxidative phosphorylation. The respiratory chain contains 3 multisubunit complexes succinate dehydrogenase (complex II, CII), ubiquinol-cytochrome c oxidoreductase (cytochrome b-c1 complex, complex III, CIII) and cytochrome c oxidase (complex IV, CIV), that cooperate to transfer electrons derived from NADH and succinate to molecular oxygen, creating an electrochemical gradient over the inner membrane that drives transmembrane transport and the ATP synthase. Cytochrome c oxidase is the component of the respiratory chain that catalyzes the reduction of oxygen to water. Electrons originating from reduced cytochrome c in the intermembrane space (IMS) are transferred via the dinuclear copper A center (CU(A)) of subunit 2 and heme A of subunit 1 to the active site in subunit 1, a binuclear center (BNC) formed by heme A3 and copper B (CU(B)). The BNC reduces molecular oxygen to 2 water molecules using 4 electrons from cytochrome c in the IMS and 4 protons from the mitochondrial matrix. This Phyllostomus hastatus (Greater spear-nosed bat) protein is Cytochrome c oxidase subunit 2 (MT-CO2).